Reading from the N-terminus, the 115-residue chain is Large ribosomal subunit protein bL19 (115 aa).

The protein belongs to the bacterial ribosomal protein bL19 family.

Its function is as follows. This protein is located at the 30S-50S ribosomal subunit interface and may play a role in the structure and function of the aminoacyl-tRNA binding site. The protein is Large ribosomal subunit protein bL19 of Akkermansia muciniphila (strain ATCC BAA-835 / DSM 22959 / JCM 33894 / BCRC 81048 / CCUG 64013 / CIP 107961 / Muc).